The following is a 449-amino-acid chain: Tubulin alpha chain (449 aa).

Residues 1–4 carry the MREC motif motif; it reads MREC. Q11 is a GTP binding site. K40 is subject to N6-acetyllysine. GTP is bound by residues E71, S140, G144, T145, T179, N206, and N228. Mg(2+) is bound at residue E71. E254 is a catalytic residue. Positions 430–449 are disordered; sequence KDYEEVGADSADAEDEGEEY. Positions 431-449 are enriched in acidic residues; that stretch reads DYEEVGADSADAEDEGEEY.

The protein belongs to the tubulin family. Dimer of alpha and beta chains. A typical microtubule is a hollow water-filled tube with an outer diameter of 25 nm and an inner diameter of 15 nM. Alpha-beta heterodimers associate head-to-tail to form protofilaments running lengthwise along the microtubule wall with the beta-tubulin subunit facing the microtubule plus end conferring a structural polarity. Microtubules usually have 13 protofilaments but different protofilament numbers can be found in some organisms and specialized cells. It depends on Mg(2+) as a cofactor. Post-translationally, some glutamate residues at the C-terminus are polyglycylated, resulting in polyglycine chains on the gamma-carboxyl group. Glycylation is mainly limited to tubulin incorporated into axonemes (cilia and flagella) whereas glutamylation is prevalent in neuronal cells, centrioles, axonemes, and the mitotic spindle. Both modifications can coexist on the same protein on adjacent residues, and lowering polyglycylation levels increases polyglutamylation, and reciprocally. The precise function of polyglycylation is still unclear. In terms of processing, some glutamate residues at the C-terminus are polyglutamylated, resulting in polyglutamate chains on the gamma-carboxyl group. Polyglutamylation plays a key role in microtubule severing by spastin (SPAST). SPAST preferentially recognizes and acts on microtubules decorated with short polyglutamate tails: severing activity by SPAST increases as the number of glutamates per tubulin rises from one to eight, but decreases beyond this glutamylation threshold. Acetylation of alpha chains at Lys-40 is located inside the microtubule lumen. This modification has been correlated with increased microtubule stability, intracellular transport and ciliary assembly. Post-translationally, undergoes a tyrosination/detyrosination cycle, the cyclic removal and re-addition of a C-terminal tyrosine residue by the enzymes tubulin tyrosine carboxypeptidase (MATCAP1, VASH1 or VASH2) and tubulin tyrosine ligase (TTL), respectively. In terms of processing, tyrosination promotes microtubule interaction with CAP-Gly microtubule plus-end tracking proteins. Tyrosinated tubulins regulate the initiation of dynein-driven motility. Detyrosination is involved in metaphase plate congression by guiding chromosomes during mitosis. Detyrosination increases microtubules-dependent mechanotransduction in dystrophic cardiac and skeletal muscle. In cardiomyocytes, detyrosinated microtubules are required to resist to contractile compression during contraction.

The protein resides in the cytoplasm. It is found in the cytoskeleton. The catalysed reaction is GTP + H2O = GDP + phosphate + H(+). Tubulin is the major constituent of microtubules, a cylinder consisting of laterally associated linear protofilaments composed of alpha- and beta-tubulin heterodimers. Microtubules grow by the addition of GTP-tubulin dimers to the microtubule end, where a stabilizing cap forms. Below the cap, tubulin dimers are in GDP-bound state, owing to GTPase activity of alpha-tubulin. The protein is Tubulin alpha chain (tuba) of Xenopus laevis (African clawed frog).